The chain runs to 360 residues: MAQLSLQHIQKIYDNQVHVVKDFNLEIADKEFIVFVGPSGCGKSTTLRMIAGLEEISGGDLLIDGKRMNDVPAKARNIAMVFQNYALYPHMTVYDNMAFGLKMQKIAREVIDERVNWAAQILGLREYLKRKPGALSGGQRQRVALGRAIVREAGVFLMDEPLSNLDAKLRVQMRAEISKLHQKLNTTMIYVTHDQTEAMTMATRIVIMKDGIVQQVGAPKTVYNQPANMFVAGFIGSPAMNFIRGTIDGNKFVTETLKLTIPEEKLAVLKTQESLHKPIVMGIRPEDIHPDAQEENNISAKISVAELTGAEFMLYTTVGGHELVVRAGALNDYHAGENITIHFDMTKCHFFDAETEIAIC.

The 232-residue stretch at 4–235 (LSLQHIQKIY…PANMFVAGFI (232 aa)) folds into the ABC transporter domain. Residue 37-44 (GPSGCGKS) participates in ATP binding.

This sequence belongs to the ABC transporter superfamily.

This is an uncharacterized protein from Escherichia coli O6:H1 (strain CFT073 / ATCC 700928 / UPEC).